Here is a 405-residue protein sequence, read N- to C-terminus: Histidine decarboxylase (405 aa).

Residue H121 participates in substrate binding. N6-(pyridoxal phosphate)lysine is present on K234.

Belongs to the group II decarboxylase family. In terms of assembly, homotetramer. Pyridoxal 5'-phosphate is required as a cofactor.

The catalysed reaction is L-histidine + H(+) = histamine + CO2. Its pathway is siderophore biosynthesis; pseudomonine biosynthesis. This Pseudomonas fluorescens protein is Histidine decarboxylase.